The sequence spans 163 residues: IQ domain-containing protein F2 (163 aa).

IQ domains lie at 42–71 (RVIA…STWI) and 98–127 (RERA…AIYV).

In Bos taurus (Bovine), this protein is IQ domain-containing protein F2 (IQCF2).